A 482-amino-acid chain; its full sequence is Ubiquitin carboxyl-terminal hydrolase MINDY-1 (482 aa).

Residues 1-119 (MEQPQAECPA…RPQQLPQSPR (119 aa)) form a disordered region. The span at 21-66 (ESEKHEALSGPEKHPQDKDGADAAPEKHPQDKDGADAHGEAGKQKS) shows a compositional bias: basic and acidic residues. Over residues 82 to 94 (CPPPEASSSPPGP) the composition is skewed to pro residues. Residues 106-119 (EACSRPQQLPQSPR) show a composition bias toward polar residues. Residue serine 117 is modified to Phosphoserine. Cysteine 151 acts as the Nucleophile in catalysis. Histidine 333 functions as the Proton acceptor in the catalytic mechanism. Positions 402–441 (QVDQDYLIALSLQQQQQPQGMLGLSDLELAQQLQQEEYQQ) are ubiquitin-binding domain (UBD). Positions 437–446 (EEYQQQQAVQ) are enriched in low complexity. Positions 437 to 482 (EEYQQQQAVQPVRTRAPSSPGRGATSGRPAGERRQRSKTESDCVLL) are disordered. Residue serine 454 is modified to Phosphoserine. Basic and acidic residues predominate over residues 466 to 482 (AGERRQRSKTESDCVLL).

The protein belongs to the MINDY deubiquitinase family. FAM63 subfamily.

The enzyme catalyses Thiol-dependent hydrolysis of ester, thioester, amide, peptide and isopeptide bonds formed by the C-terminal Gly of ubiquitin (a 76-residue protein attached to proteins as an intracellular targeting signal).. Its function is as follows. Hydrolase that can specifically remove 'Lys-48'-linked conjugated ubiquitin from proteins. Has exodeubiquitinase activity and has a preference for long polyubiquitin chains. May play a regulatory role at the level of protein turnover. The polypeptide is Ubiquitin carboxyl-terminal hydrolase MINDY-1 (Mindy1) (Rattus norvegicus (Rat)).